We begin with the raw amino-acid sequence, 331 residues long: tRNA-cytidine(32) 2-sulfurtransferase (331 aa).

Residues 1 to 31 are disordered; that stretch reads MNAPHMNDTTADAATLDATAAPAGRPALTRR. Residues 8–23 show a composition bias toward low complexity; the sequence is DTTADAATLDATAAPA. Residues 71 to 76 carry the PP-loop motif motif; that stretch reads SGGKDS. [4Fe-4S] cluster is bound by residues Cys-146, Cys-149, and Cys-237.

It belongs to the TtcA family. Homodimer. The cofactor is Mg(2+). [4Fe-4S] cluster serves as cofactor.

Its subcellular location is the cytoplasm. It catalyses the reaction cytidine(32) in tRNA + S-sulfanyl-L-cysteinyl-[cysteine desulfurase] + AH2 + ATP = 2-thiocytidine(32) in tRNA + L-cysteinyl-[cysteine desulfurase] + A + AMP + diphosphate + H(+). It functions in the pathway tRNA modification. In terms of biological role, catalyzes the ATP-dependent 2-thiolation of cytidine in position 32 of tRNA, to form 2-thiocytidine (s(2)C32). The sulfur atoms are provided by the cysteine/cysteine desulfurase (IscS) system. In Burkholderia lata (strain ATCC 17760 / DSM 23089 / LMG 22485 / NCIMB 9086 / R18194 / 383), this protein is tRNA-cytidine(32) 2-sulfurtransferase.